A 181-amino-acid polypeptide reads, in one-letter code: ATP synthase subunit delta (181 aa).

It belongs to the ATPase delta chain family. As to quaternary structure, F-type ATPases have 2 components, F(1) - the catalytic core - and F(0) - the membrane proton channel. F(1) has five subunits: alpha(3), beta(3), gamma(1), delta(1), epsilon(1). F(0) has three main subunits: a(1), b(2) and c(10-14). The alpha and beta chains form an alternating ring which encloses part of the gamma chain. F(1) is attached to F(0) by a central stalk formed by the gamma and epsilon chains, while a peripheral stalk is formed by the delta and b chains.

The protein localises to the cell inner membrane. Functionally, f(1)F(0) ATP synthase produces ATP from ADP in the presence of a proton or sodium gradient. F-type ATPases consist of two structural domains, F(1) containing the extramembraneous catalytic core and F(0) containing the membrane proton channel, linked together by a central stalk and a peripheral stalk. During catalysis, ATP synthesis in the catalytic domain of F(1) is coupled via a rotary mechanism of the central stalk subunits to proton translocation. Its function is as follows. This protein is part of the stalk that links CF(0) to CF(1). It either transmits conformational changes from CF(0) to CF(1) or is implicated in proton conduction. The protein is ATP synthase subunit delta of Aquifex aeolicus (strain VF5).